Consider the following 1005-residue polypeptide: Protein TIC 214 (1005 aa).

Transmembrane regions (helical) follow at residues 25-45, 67-87, 91-111, 131-151, 177-197, and 304-324; these read VGLY…LFLL, FFTG…HLAL, HTIL…SNSG, SFQL…SVLG, FVGW…VFVW, and LFSI…PLLY. Disordered stretches follow at residues 457–481 and 767–833; these read VEEG…EREE and KKKK…KRKQ. Residues 783–810 show a composition bias toward basic residues; sequence KQKKVKSKQKKVKSKQKKVKSKQKKVKS. The segment covering 811–824 has biased composition (basic and acidic residues); sequence KQNEIKSKQNEIKS.

The protein belongs to the TIC214 family. In terms of assembly, part of the Tic complex.

The protein localises to the plastid. It is found in the chloroplast inner membrane. Involved in protein precursor import into chloroplasts. May be part of an intermediate translocation complex acting as a protein-conducting channel at the inner envelope. The protein is Protein TIC 214 of Oenothera berteroana (Bertero's evening primrose).